Here is a 292-residue protein sequence, read N- to C-terminus: Aquaporin-3 (292 aa).

Residues 1–24 (MGRQKELMNRCGEMLHIRYRLLRQ) lie on the Cytoplasmic side of the membrane. Residues 25-42 (ALAECLGTLILVMFGCGS) form a helical membrane-spanning segment. Topologically, residues 43 to 56 (VAQVVLSRGTHGGF) are extracellular. The helical transmembrane segment at 57–74 (LTINLAFGFAVTLAILVA) threads the bilayer. Over 75–78 (GQVS) the chain is Cytoplasmic. The discontinuously helical intramembrane region spans 79–92 (GAHLNPAVTFAMCF). The short motif at 83 to 85 (NPA) is the NPA 1 element. At 93–100 (LAREPWIK) the chain is on the cytoplasmic side. Residues 101-121 (LPIYTLAQTLGAFLGAGIVFG) traverse the membrane as a helical segment. The Extracellular segment spans residues 122-159 (LYYDAIWAFAGNELVVSGPNGTAGIFATYPSGHLDMVN). N-linked (GlcNAc...) asparagine glycosylation is present at Asn141. A helical transmembrane segment spans residues 160–177 (GFFDQFIGTAALIVCVLA). The Cytoplasmic portion of the chain corresponds to 178 to 189 (IVDPYNNPVPRG). The helical transmembrane segment at 190–206 (LEAFTVGLVVLVIGTSM) threads the bilayer. Over 207–210 (GFNS) the chain is Extracellular. The discontinuously helical intramembrane region spans 211-224 (GYAVNPARDFGPRL). The short motif at 215 to 217 (NPA) is the NPA 2 element. Over 225 to 242 (FTALAGWGSEVFTTGQNW) the chain is Extracellular. A helical membrane pass occupies residues 243 to 264 (WWVPIVSPLLGSIGGVFVYQLM). Residues 265 to 292 (IGCHLEQPPPSTEAENVKLAHMKHKEQI) lie on the Cytoplasmic side of the membrane.

This sequence belongs to the MIP/aquaporin (TC 1.A.8) family. In terms of assembly, homotetramer; each monomer provides an independent glycerol/water pore. Could also exist in other oligomeric states. As to expression, detected in kidney medulla and papilla, in collecting duct cells. Detected in colon.

Its subcellular location is the cell membrane. It is found in the basolateral cell membrane. The enzyme catalyses glycerol(in) = glycerol(out). The catalysed reaction is H2O(in) = H2O(out). It carries out the reaction urea(in) = urea(out). It catalyses the reaction H2O2(out) = H2O2(in). Its activity is regulated as follows. Channel activity is inhibited by mercury ions. Functionally, aquaglyceroporins form homotetrameric transmembrane channels, with each monomer independently mediating glycerol and water transport across the plasma membrane along their osmotic gradient. Could also be permeable to urea. Also participates in cell permeability to H2O2 and H2O2-mediated signaling. In skin, transports glycerol to the epidermis and stratum corneum, where it maintains hydration, elasticity, and supports lipid biosynthesis for barrier repair. In kidney, contributes to the reabsorption of water, helping the body maintain proper fluid balance. The polypeptide is Aquaporin-3 (Rattus norvegicus (Rat)).